The following is a 134-amino-acid chain: uncharacterized protein (134 aa).

The next 3 helical transmembrane spans lie at 21 to 41, 52 to 72, and 95 to 115; these read FSTT…LYLI, LVLL…TPYE, and IVMA…VYII.

Its subcellular location is the host membrane. This is an uncharacterized protein from Acidianus two-tailed virus (ATV).